Reading from the N-terminus, the 456-residue chain is Adenylosuccinate synthetase isozyme 2 (456 aa).

Residues 1–24 (MAFAETNPAASSLPNGDCGRPRAR) form a disordered region. GTP contacts are provided by residues 39–45 (GDEGKGK) and 67–69 (GHT). Residue D40 is the Proton acceptor of the active site. Mg(2+) is bound by residues D40 and G67. D40 contributes to the substrate binding site. IMP is bound by residues 40-43 (DEGK), 65-68 (NAGH), T162, R176, N255, T270, and R334. H68 functions as the Proton donor in the catalytic mechanism. 330 to 336 (VTTGRKR) contributes to the substrate binding site. Residues R336, 362-364 (KLD), and 444-447 (GVGK) contribute to the GTP site.

The protein belongs to the adenylosuccinate synthetase family. As to quaternary structure, homodimer. The cofactor is Mg(2+). Widely expressed.

The protein localises to the cytoplasm. Its subcellular location is the mitochondrion. The catalysed reaction is IMP + L-aspartate + GTP = N(6)-(1,2-dicarboxyethyl)-AMP + GDP + phosphate + 2 H(+). Its pathway is purine metabolism; AMP biosynthesis via de novo pathway; AMP from IMP: step 1/2. Its activity is regulated as follows. Inhibited competitively by AMP and IMP and non-competitively by fructose 1,6-bisphosphate. Plays an important role in the de novo pathway and in the salvage pathway of purine nucleotide biosynthesis. Catalyzes the first committed step in the biosynthesis of AMP from IMP. This chain is Adenylosuccinate synthetase isozyme 2, found in Sus scrofa (Pig).